The primary structure comprises 231 residues: Large ribosomal subunit protein uL1 (231 aa).

The protein belongs to the universal ribosomal protein uL1 family. Part of the 50S ribosomal subunit.

In terms of biological role, binds directly to 23S rRNA. The L1 stalk is quite mobile in the ribosome, and is involved in E site tRNA release. Protein L1 is also a translational repressor protein, it controls the translation of the L11 operon by binding to its mRNA. The chain is Large ribosomal subunit protein uL1 from Acetivibrio thermocellus (strain ATCC 27405 / DSM 1237 / JCM 9322 / NBRC 103400 / NCIMB 10682 / NRRL B-4536 / VPI 7372) (Clostridium thermocellum).